Consider the following 1726-residue polypeptide: Transcription elongation factor SPT6 (1726 aa).

Acidic residues-rich tracts occupy residues 1 to 18 (MSDF…EFEE), 31 to 45 (EEDE…EDQD), and 55 to 79 (DDDD…SDSG). Disordered regions lie at residues 1–196 (MSDF…KGKK), 219–248 (AEFD…KKQT), and 482–512 (EVSE…QASR). Ser90 is subject to Phosphoserine. Positions 93 to 104 (DYLDDDDLDLIE) are enriched in acidic residues. Residues 110–120 (KVKRRKKKYSR) are compositionally biased toward basic residues. 4 stretches are compositionally biased toward acidic residues: residues 146–157 (GDGEGEVEDGEA), 166–186 (DEEE…DDDG), 219–240 (AEFD…DDES), and 484–501 (SEED…EEEE). The span at 502 to 512 (QKGPDLKQASR) shows a compositional bias: basic and acidic residues. Positions 806–865 (LKRRNAWREDEREKKQQDVENLKKFLLSKKPHVVAVSGENRDAHMVMEDIKRTISELEQN) form a coiled coil. The S1 motif domain maps to 1204 to 1273 (WNHFDSGSCP…EKFNVDLTCR (70 aa)). The SH2 domain maps to 1316-1426 (YIKRVIAHPS…LLGHKYFHEC (111 aa)). Phosphothreonine is present on Thr1522. Ser1525 is subject to Phosphoserine. Over residues 1611–1627 (LMTPSYSYTTPGQQQAM) the composition is skewed to polar residues. Residues 1611-1726 (LMTPSYSYTT…ATPLLDEMDR (116 aa)) are disordered. 2 stretches are compositionally biased toward low complexity: residues 1628–1640 (TTPQ…PQSS) and 1647–1656 (SSSTPSSSSS). The segment covering 1657-1669 (RVRTPQPKASSHT) has biased composition (polar residues).

This sequence belongs to the SPT6 family.

The protein localises to the nucleus. Its function is as follows. Histone H3-H4 chaperone that plays a role in maintenance of chromatin structure during RNA polymerase II transcription elongation. Promotes the activation of the myogenic gene program by entailing erasure of the repressive H3K27me3 epigenetic mark through stabilization of the chromatin interaction of the H3K27 demethylase KDM6A. Plays an important role during early patterning and somitogenesis of the embryo. This Danio rerio (Zebrafish) protein is Transcription elongation factor SPT6 (supt6h).